The following is a 306-amino-acid chain: Probable thioesterase atnL (306 aa).

The protein belongs to the lcsJ thioesterase family.

Part of the gene cluster that mediates the biosynthesis of aspercryptins, linear lipopeptides built from six amino acids including 2 highly unusual and nonproteogenic amino acids, 2-amino-octanoic acid (2aoa) and 2-amino-dodecanol (2adol). The core structure of aspercryptins is as follows: Ser/Ala-Thr-Ile/Val-2aoa-Asn-2adol. The first step of aspercryptin biosynthesis is the generation of the fatty acid precursors, octanoic and dodecanoic acids, by the FAS subunits atnF and atnM. The fatty acid precursors are likely transformed into the corresponding alpha-amino fatty acids in three steps. First, they are hydroxylated by the cytochrome P450 monooxygenase atnE, then oxidized to the corresponding alpha-keto acids by the NAD(P)-dependent oxidoreductase atnD, and finally converted to the alpha-amino fatty acids by the PLP-dependent aminotransferases atnH or atnJ. the alpha-amino fatty acids, 2-amino-octanoic and 2-amino-dodecanoic acids, are recognized, activated, and covalently tethered to the NRPS atnA by its fourth and sixth adenylation domains. The second module of atnA is the Thr module and contains an epimerase (E) domain responsible for the epimerization of Thr to D-allo-Thr. Additionally, despite atnA having only one epimerase domain, the first amino acid of aspercryptin A1 is D-Ser, suggesting that serine is either loaded directly as D-Ser on the first module or that the epimerase domain in the threonine module epimerizes both L-Ser and L-Thr. After condensation of the hexapeptide of aspercryptin, the C-terminal reductase (TE) domain might be involved in the reductive release and production of the aldehyde hexapeptide. Further reduction would generate aspercryptins. The variety of aspercryptins produced reflects the flexibility of the atnA NRPS, allowing incorporation of alanine instead of serine, valine for isoleucine, and a C10 fatty amino alcohol instead of the C12 version. AtnB seems to be involved in the selectivity for Ile versus Val by the third module. Moreover, type B, C and D aspercryptins have an additional N-terminal cichorine, acetyl and propionyl group respectively. The protein is Probable thioesterase atnL of Emericella nidulans (strain FGSC A4 / ATCC 38163 / CBS 112.46 / NRRL 194 / M139) (Aspergillus nidulans).